Here is a 226-residue protein sequence, read N- to C-terminus: Cytidylate kinase (226 aa).

10-18 (GPASSGKST) is an ATP binding site.

It belongs to the cytidylate kinase family. Type 1 subfamily.

The protein localises to the cytoplasm. It carries out the reaction CMP + ATP = CDP + ADP. It catalyses the reaction dCMP + ATP = dCDP + ADP. The polypeptide is Cytidylate kinase (Streptococcus thermophilus (strain ATCC BAA-491 / LMD-9)).